The following is a 126-amino-acid chain: Fluoride-specific ion channel FluC (126 aa).

4 helical membrane-spanning segments follow: residues 4-24 (FMLL…RYLI), 35-55 (GFPY…GVLM), 71-91 (IIGL…MDNV), and 104-124 (LNIL…FQLM). Na(+) is bound by residues glycine 78 and threonine 81.

This sequence belongs to the fluoride channel Fluc/FEX (TC 1.A.43) family.

It is found in the cell inner membrane. The enzyme catalyses fluoride(in) = fluoride(out). Na(+) is not transported, but it plays an essential structural role and its presence is essential for fluoride channel function. Functionally, fluoride-specific ion channel. Important for reducing fluoride concentration in the cell, thus reducing its toxicity. The polypeptide is Fluoride-specific ion channel FluC (Aliivibrio salmonicida (strain LFI1238) (Vibrio salmonicida (strain LFI1238))).